A 48-amino-acid chain; its full sequence is 2-deoxy-glucose resistant protein 1, mitochondrial (48 aa).

A mitochondrion-targeting transit peptide spans 1–28 (MQVGFVSQTNCRSFPACIVFLFQMSQRQ).

It is found in the mitochondrion. The sequence is that of 2-deoxy-glucose resistant protein 1, mitochondrial (DGR1) from Saccharomyces cerevisiae (strain ATCC 204508 / S288c) (Baker's yeast).